Reading from the N-terminus, the 395-residue chain is L-methionine gamma-lyase (395 aa).

Pyridoxal 5'-phosphate-binding positions include 56 to 58 (YTR) and 86 to 87 (GM). A substrate-binding site is contributed by tyrosine 111. Residue 206-208 (SVT) coordinates pyridoxal 5'-phosphate. N6-(pyridoxal phosphate)lysine is present on lysine 209. Arginine 373 is a substrate binding site.

The protein belongs to the trans-sulfuration enzymes family. L-methionine gamma-lyase subfamily. As to quaternary structure, homotetramer. The cofactor is pyridoxal 5'-phosphate.

The catalysed reaction is L-methionine + H2O = methanethiol + 2-oxobutanoate + NH4(+). It catalyses the reaction L-homocysteine + H2O = 2-oxobutanoate + hydrogen sulfide + NH4(+) + H(+). Its function is as follows. Catalyzes the alpha,gamma-elimination of L-methionine to produce methanethiol, 2-oxobutanoate and ammonia; methanethiol (methyl mercaptan) is considered to be one of the main causes of the oral malodor associated with periodontitis. Also displays homocysteine desulfhydrase activity, degrading homocysteine to produce hydrogen sulfide, 2-oxobutanoate and ammonia. L-cysteine and S-methyl-L-cysteine are poor substrates for the enzyme. In terms of biological role, plays an important role in the resistance of F.nucleatum to the antibacterial agent 3-chloro-DL-alanine (3CA), thanks to its 3CA chloride-lyase (deaminating) activity. This chain is L-methionine gamma-lyase, found in Fusobacterium nucleatum subsp. polymorphum (Fusobacterium polymorphum).